The chain runs to 175 residues: Large ribosomal subunit protein uL10 (175 aa).

Belongs to the universal ribosomal protein uL10 family. In terms of assembly, part of the ribosomal stalk of the 50S ribosomal subunit. The N-terminus interacts with L11 and the large rRNA to form the base of the stalk. The C-terminus forms an elongated spine to which L12 dimers bind in a sequential fashion forming a multimeric L10(L12)X complex.

Functionally, forms part of the ribosomal stalk, playing a central role in the interaction of the ribosome with GTP-bound translation factors. The protein is Large ribosomal subunit protein uL10 of Xylella fastidiosa (strain M12).